Reading from the N-terminus, the 749-residue chain is Protein phosphatase 1E (749 aa).

Residues 21–128 (EFRGPCGGGE…PPLPPLPRPL (108 aa)) are disordered. 3 tandem repeats follow at residues 31–32 (PE), 33–34 (PE), and 35–36 (PE). Positions 31 to 44 (PEPEPESEPEPEPE) are 7 X 2 AA tandem repeats of P-E. The segment covering 31–45 (PEPEPESEPEPEPEA) has biased composition (acidic residues). The stretch at 37 to 38 (SE) is one 4; approximate repeat. A run of 3 repeats spans residues 39–40 (PE), 41–42 (PE), and 43–44 (PE). Residues 46–55 (ELVAAEAAEA) show a composition bias toward low complexity. Residues 69-102 (ATEEGEQDQDPEPEDEAVEEETATEGEEEEEEEA) show a composition bias toward acidic residues. Over residues 110-126 (VPPPPQPQLPPLPPLPR) the composition is skewed to pro residues. One can recognise a PPM-type phosphatase domain in the interval 224–485 (QIYYETSIHA…DNITVIVVFL (262 aa)). Residues Asp-270, Gly-271, Asp-432, and Asp-476 each contribute to the Mn(2+) site. Positions 495–537 (SEESEWTENSFQGGQEDGGDDKETHGECKRPWPQHQCSAPADL) are disordered. Residues 515 to 524 (DKETHGECKR) show a composition bias toward basic and acidic residues. Phosphoserine occurs at positions 532 and 545. The interval 608 to 627 (VKSSLPERSGAGEPRVSFNL) is disordered.

This sequence belongs to the PP2C family. In terms of assembly, heterotrimer. Interacts with PAX1 and ARHGEF6 (or ARHGEF7). Requires Mg(2+) as cofactor. It depends on Mn(2+) as a cofactor.

The protein localises to the nucleus. The protein resides in the cytoplasm. It catalyses the reaction O-phospho-L-seryl-[protein] + H2O = L-seryl-[protein] + phosphate. The catalysed reaction is O-phospho-L-threonyl-[protein] + H2O = L-threonyl-[protein] + phosphate. Protein phosphatase that inactivates multifunctional CaM kinases such as CAMK4 and CAMK2. Dephosphorylates and inactivates PAK. May play a role in the inhibition of actin fiber stress breakdown and in morphological changes driven by TNK2/CDC42. Dephosphorylates PRKAA2. This Mus musculus (Mouse) protein is Protein phosphatase 1E (Ppm1e).